A 130-amino-acid polypeptide reads, in one-letter code: Small ribosomal subunit protein uS9 (130 aa).

It belongs to the universal ribosomal protein uS9 family.

This Burkholderia ambifaria (strain MC40-6) protein is Small ribosomal subunit protein uS9.